The chain runs to 52 residues: Insulin-2 (52 aa).

3 disulfides stabilise this stretch: Cys-7–Cys-38, Cys-19–Cys-51, and Cys-37–Cys-42.

This sequence belongs to the insulin family. Heterodimer of a B chain and an A chain linked by two disulfide bonds.

Its subcellular location is the secreted. Functionally, insulin decreases blood glucose concentration. It increases cell permeability to monosaccharides, amino acids and fatty acids. It accelerates glycolysis, the pentose phosphate cycle, and glycogen synthesis in liver. This Huso dauricus (Kaluga sturgeon) protein is Insulin-2.